The chain runs to 2948 residues: Transforming acidic coiled-coil-containing protein 2 (2948 aa).

Positions 1–30 are enriched in polar residues; it reads MGNENSTSDNQRTLSAQTPRSAQPPGNSQN. Disordered regions lie at residues 1–304, 314–333, 392–453, 465–785, 825–964, 985–1050, 1062–1154, 1243–1274, 1296–1400, 1427–1463, 1493–1661, 1675–1705, 1741–1878, 1907–2035, and 2052–2460; these read MGNE…TDDL, RSNS…QESC, AAGG…MPVS, LVGL…PQGE, SSEK…VSPP, CTGQ…QPDS, ALAP…GEAT, AAQR…VGEP, QPGA…EQIA, PGEK…VTLL, ASDK…GERR, LGNQ…AGEA, VLPG…ESPT, HAGL…SSGT, and LEPR…ETPP. Residues 174–184 are compositionally biased toward basic and acidic residues; that stretch reads GRERQPKEEGQ. Phosphoserine occurs at positions 197, 201, and 269. Val325 carries the phosphothreonine modification. Ser493 carries the post-translational modification Phosphoserine. Positions 496–507 are enriched in basic and acidic residues; that stretch reads ERGEHLNTEQSH. Phosphoserine occurs at positions 561, 571, and 575. Over residues 604–629 the composition is skewed to basic and acidic residues; it reads SKRDPEVGKDELSKPSSDAESRDHPS. Phosphoserine is present on Ser758. Residues 911–926 show a composition bias toward low complexity; the sequence is SDTPTSSPTDMVWESS. The residue at position 962 (Ser962) is a Phosphoserine. The span at 985–996 shows a compositional bias: polar residues; that stretch reads CTGQGPNKSQQA. Ser1025 is modified (phosphoserine). 2 positions are modified to phosphoserine: Ser1267 and Ser1313. Residues 1348-1357 show a composition bias toward low complexity; it reads ATAPGAGAKA. The span at 1383 to 1400 shows a compositional bias: polar residues; sequence DPKQGTSGGVDTSSEQIA. At Ser1562 the chain carries Phosphoserine. Composition is skewed to basic and acidic residues over residues 1801–1823 and 1834–1854; these read DETH…RESP and PKKD…RGAE. A compositionally biased stretch (low complexity) spans 1862–1873; that stretch reads ADDIIQPAAPAD. Residues 1939 to 1948 show a composition bias toward basic and acidic residues; sequence PAKDLSRSSD. Residues 1963–1976 are compositionally biased toward pro residues; sequence KAPPAPPPPPPEVI. Ser2072 is subject to Phosphoserine. The span at 2074–2102 shows a compositional bias: polar residues; the sequence is DSVPISKSTLSRSLSLQASDFDGASSSGN. Residues 2114-2124 show a composition bias toward low complexity; sequence STGSSSASSTL. A compositionally biased stretch (basic residues) spans 2125 to 2141; that stretch reads KRTKKPRPPSLKKKQTT. Ser2161 and Ser2226 each carry phosphoserine. Thr2246 carries the post-translational modification Phosphothreonine. At Ser2256 the chain carries Phosphoserine. Residues 2265–2275 show a composition bias toward basic and acidic residues; it reads LEFDYSEDKSS. The segment covering 2288 to 2305 has biased composition (basic residues); the sequence is KIGKKPVAKMPLRRPKMK. The 89-residue stretch at 2315-2403 folds into the SPAZ domain; that stretch reads PASPPRSPAE…SPASFEIPAS (89 aa). Residues Ser2317, Ser2321, Ser2359, Ser2389, Ser2392, Ser2394, and Ser2403 each carry the phosphoserine modification. A compositionally biased stretch (polar residues) spans 2348 to 2368; sequence NPFSSTSKMQESPKLPQQSYN. Low complexity predominate over residues 2382 to 2395; sequence KTSSKTPSSPSKSP. Phosphothreonine is present on residues Thr2430, Thr2451, Thr2455, and Thr2458. Phosphoserine is present on residues Ser2512 and Ser2534. At Thr2553 the chain carries Phosphothreonine. Positions 2555–2577 are disordered; that stretch reads QESPVKSSPVRMSESPTPCSGSS. Ser2557 and Ser2569 each carry phosphoserine. The span at 2568-2577 shows a compositional bias: polar residues; sequence ESPTPCSGSS. At Thr2625 the chain carries Phosphothreonine. Coiled-coil stretches lie at residues 2675–2703 and 2746–2947; these read AQKL…LASR and DLDS…KMGK.

It belongs to the TACC family. Interacts with CCDC100/CEP120. Interacts with microtubules. Interacts with YEATS4, GCN5L2 and PCAF. Post-translationally, phosphorylated by TTK; which is required for localization in centrosome. Strongly expressed in heart, skeletal muscle, brain, prostate, thyroid and trachea.

It localises to the cytoplasm. Its subcellular location is the nucleus. The protein localises to the cytoskeleton. The protein resides in the microtubule organizing center. It is found in the centrosome. Its function is as follows. Plays a role in the microtubule-dependent coupling of the nucleus and the centrosome. Involved in the processes that regulate centrosome-mediated interkinetic nuclear migration (INM) of neural progenitors. May play a role in organizing centrosomal microtubules. May act as a tumor suppressor protein. May represent a tumor progression marker. The polypeptide is Transforming acidic coiled-coil-containing protein 2 (TACC2) (Homo sapiens (Human)).